We begin with the raw amino-acid sequence, 102 residues long: Small ribosomal subunit protein uS10 (102 aa).

This sequence belongs to the universal ribosomal protein uS10 family. Part of the 30S ribosomal subunit.

In terms of biological role, involved in the binding of tRNA to the ribosomes. The chain is Small ribosomal subunit protein uS10 from Mycoplasma capricolum subsp. capricolum (strain California kid / ATCC 27343 / NCTC 10154).